Here is a 105-residue protein sequence, read N- to C-terminus: Thioredoxin (105 aa).

The Thioredoxin domain maps to 2–105 (VKLIESKEAF…KLEASITEYA (104 aa)). Lys3 carries the N6-acetyllysine modification. Lys8 is subject to N6-succinyllysine. Active-site nucleophile residues include Cys32 and Cys35. Residues Cys32 and Cys35 are joined by a disulfide bond. Lys39 is modified (N6-acetyllysine). Residues Cys62 and Cys69 each carry the S-nitrosocysteine modification. At Cys73 the chain carries S-nitrosocysteine; alternate. An N6-acetyllysine; alternate modification is found at Lys94. Position 94 is an N6-succinyllysine; alternate (Lys94).

This sequence belongs to the thioredoxin family. In terms of assembly, homodimer; disulfide-linked. Interacts with TXNIP through the redox-active site. Interacts with MAP3K5 and CASP3. Interacts with APEX1; the interaction stimulates the FOS/JUN AP-1 DNA-binding activity in a redox-dependent manner. In terms of processing, in the fully reduced protein, both Cys-69 and Cys-73 are nitrosylated in response to nitric oxide (NO). When two disulfide bonds are present in the protein, only Cys-73 is nitrosylated. Cys-73 can serve as donor for nitrosylation of target proteins.

Its subcellular location is the nucleus. It is found in the cytoplasm. The protein resides in the secreted. Participates in various redox reactions through the reversible oxidation of its active center dithiol to a disulfide and catalyzes dithiol-disulfide exchange reactions. Plays a role in the reversible S-nitrosylation of cysteine residues in target proteins, and thereby contributes to the response to intracellular nitric oxide. Nitrosylates the active site Cys of CASP3 in response to nitric oxide (NO), and thereby inhibits caspase-3 activity. Induces the FOS/JUN AP-1 DNA binding activity in ionizing radiation (IR) cells through its oxidation/reduction status and stimulates AP-1 transcriptional activity. Its function is as follows. ADF augments the expression of the interleukin-2 receptor TAC (IL2R/P55). The protein is Thioredoxin (Txn) of Mus musculus (Mouse).